The chain runs to 501 residues: Glutamate--tRNA ligase (501 aa).

The short motif at 11–21 (PSPTGFLHIGN) is the 'HIGH' region element. The short motif at 257–261 (KLSKR) is the 'KMSKS' region element. K260 contacts ATP.

Belongs to the class-I aminoacyl-tRNA synthetase family. Glutamate--tRNA ligase type 1 subfamily. Monomer.

It is found in the cytoplasm. The enzyme catalyses tRNA(Glu) + L-glutamate + ATP = L-glutamyl-tRNA(Glu) + AMP + diphosphate. Functionally, catalyzes the attachment of glutamate to tRNA(Glu) in a two-step reaction: glutamate is first activated by ATP to form Glu-AMP and then transferred to the acceptor end of tRNA(Glu). The polypeptide is Glutamate--tRNA ligase (Limosilactobacillus reuteri subsp. reuteri (strain JCM 1112) (Lactobacillus reuteri)).